A 152-amino-acid chain; its full sequence is SKP1-like protein 8 (152 aa).

Positions 94–152 are interaction with the F-box domain of F-box proteins; that stretch reads TNAANFLNNKSLLHLAGQTVADMIKGNTPKQMREFFNIENDLTPEEEAAIRRENKWAFE.

It belongs to the SKP1 family. As to quaternary structure, part of a SCF (SKP1-cullin-F-box) protein ligase complex. In terms of tissue distribution, restricted to siliques.

Its subcellular location is the nucleus. Its pathway is protein modification; protein ubiquitination. In terms of biological role, involved in ubiquitination and subsequent proteasomal degradation of target proteins. Together with CUL1, RBX1 and a F-box protein, it forms a SCF E3 ubiquitin ligase complex. The functional specificity of this complex depends on the type of F-box protein. In the SCF complex, it serves as an adapter that links the F-box protein to CUL1. In Arabidopsis thaliana (Mouse-ear cress), this protein is SKP1-like protein 8 (ASK8).